Here is a 512-residue protein sequence, read N- to C-terminus: Cytochrome P450 84A4 (512 aa).

Residues 7–24 (LIVLVPLLLFLFPHLLLR) form a helical membrane-spanning segment. Residue Cys447 participates in heme binding.

The protein belongs to the cytochrome P450 family. The cofactor is heme. Expressed in seedlings, roots, stems and inflorescence nodes. Low or no expression in leaves, flowers, seeds and lignifying tissue.

Its subcellular location is the membrane. Functionally, cytochrome P450 involved in the production of catechol-substituted substrates needed for the arabidopyrones biosynthesis. Converts p-coumaraldehyde into caffealdehyde. This is Cytochrome P450 84A4 (CYP84A4) from Arabidopsis thaliana (Mouse-ear cress).